The following is a 191-amino-acid chain: MEYFDMRKMSVNLWRNAAGETREICTFPPAKRDFYWRASIASIAANGEFSLFPGMERIVTLLEGGEMLLESADRFNHTLKPLQPFAFAADQVVKAKLTEGQMSMDFNIMTRLDVCKAKVRIAERTFTTFGSRGGVVFVINGAWQLGDKLLTTDQGACWFDGRHTLRLLQPQGKLLFSEINWLAGHSPDQVQ.

Belongs to the Ves family.

This chain is Protein Ves, found in Shigella boydii serotype 18 (strain CDC 3083-94 / BS512).